Here is a 1181-residue protein sequence, read N- to C-terminus: C5a peptidase (1181 aa).

Positions Met1–Ala31 are cleaved as a signal peptide. Residues Thr33–Ala52 show a composition bias toward polar residues. The disordered stretch occupies residues Thr33 to Lys117. Over residues Asp70–Asn81 the composition is skewed to acidic residues. The Peptidase S8 domain maps to Lys99–Ser581. Catalysis depends on charge relay system residues Asp130, His193, and Ser512. 4 stretches are compositionally biased toward basic and acidic residues: residues Glu1029–Gln1054, Pro1061–Gln1071, Pro1078–Gln1088, and Pro1095–Ser1107. Residues Glu1029 to Lys1150 are disordered. 5 repeat units span residues Lys1034–Thr1050, Lys1051–Thr1067, Lys1068–Thr1084, Lys1085–Thr1101, and Lys1102–Lys1118. Residues Lys1034–Lys1118 are 5 X 17 AA tandem repeats. Composition is skewed to polar residues over residues Gly1109 to Arg1123 and Lys1137 to Thr1147. Residues Leu1144–Asn1148 carry the LPXTG sorting signal motif. Thr1147 is modified (pentaglycyl murein peptidoglycan amidated threonine). Positions Asn1148–Asp1181 are cleaved as a propeptide — removed by sortase.

Belongs to the peptidase S8 family. In terms of processing, cleaved by SpeB protease; leading to its degradation. Degradation by SpeB is probably strictly regulated to preserve integrity of C5a peptidase.

It localises to the secreted. The protein resides in the cell wall. The catalysed reaction is The primary cleavage site is at 67-His-|-Lys-68 in human C5a with a minor secondary cleavage site at 58-Ala-|-Ser-59.. Its function is as follows. This virulence factor of S.pyogenes specifically cleaves the human serum chemotaxin C5a at '68-Lys-|-Asp-69' bond near its C-terminus, destroying its ability to serve as a chemoattractant. This Streptococcus pyogenes serotype M1 protein is C5a peptidase (scpA).